The chain runs to 436 residues: 3-ketoacyl-CoA thiolase (436 aa).

Cys-99 functions as the Acyl-thioester intermediate in the catalytic mechanism. Active-site proton acceptor residues include His-392 and Cys-422.

The protein belongs to the thiolase-like superfamily. Thiolase family. As to quaternary structure, heterotetramer of two alpha chains (FadJ) and two beta chains (FadI).

The protein resides in the cytoplasm. The catalysed reaction is an acyl-CoA + acetyl-CoA = a 3-oxoacyl-CoA + CoA. Its pathway is lipid metabolism; fatty acid beta-oxidation. In terms of biological role, catalyzes the final step of fatty acid oxidation in which acetyl-CoA is released and the CoA ester of a fatty acid two carbons shorter is formed. The chain is 3-ketoacyl-CoA thiolase from Salmonella newport (strain SL254).